The following is a 254-amino-acid chain: 5-oxoprolinase subunit A (254 aa).

This sequence belongs to the LamB/PxpA family. Forms a complex composed of PxpA, PxpB and PxpC.

The catalysed reaction is 5-oxo-L-proline + ATP + 2 H2O = L-glutamate + ADP + phosphate + H(+). Its function is as follows. Catalyzes the cleavage of 5-oxoproline to form L-glutamate coupled to the hydrolysis of ATP to ADP and inorganic phosphate. In Burkholderia lata (strain ATCC 17760 / DSM 23089 / LMG 22485 / NCIMB 9086 / R18194 / 383), this protein is 5-oxoprolinase subunit A.